We begin with the raw amino-acid sequence, 133 residues long: Cytochrome b5 (133 aa).

The Cytochrome b5 heme-binding domain maps to 4-86; it reads EKEYILDEIS…LKNYLVGNFK (83 aa). Residues histidine 45 and histidine 69 each contribute to the heme site. A helical membrane pass occupies residues 108 to 128; the sequence is SGTGIMLIVLMALFAIAYGYY.

It belongs to the cytochrome b5 family. As to quaternary structure, interacts with alternative squalene epoxidase PHATRDRAFT_45494.

The protein localises to the endoplasmic reticulum membrane. Functionally, hemoprotein that functions as an electron carrier for membrane bound monooxygenases involved in sterol biosynthesis. This chain is Cytochrome b5, found in Phaeodactylum tricornutum (strain CCAP 1055/1).